Reading from the N-terminus, the 467-residue chain is Stromal membrane-associated protein 1 (467 aa).

The 119-residue stretch at 18 to 136 (QLILSKLLRE…KYYDKNAIAI (119 aa)) folds into the Arf-GAP domain. The C4-type zinc-finger motif lies at 33-56 (CADCEAKGPRWASWNIGVFICIRC). The span at 145–155 (PLQPLVSSPSL) shows a compositional bias: polar residues. Disordered stretches follow at residues 145-224 (PLQP…LDGP) and 408-467 (KFGL…QLWK). 2 stretches are compositionally biased toward basic and acidic residues: residues 160–185 (DKNK…EKPA) and 192–204 (KLQK…EPKK). The Interaction with clathrin heavy chains signature appears at 218 to 222 (LLGLD). Residues 413 to 438 (QAQQPQWSLSQMNQQMAGMSISSATP) are compositionally biased toward polar residues. A compositionally biased stretch (low complexity) spans 446–467 (SSTTAGWSGSSSGQTLSTQLWK).

Interacts with ARF6. Interacts with clathrin heavy chains via the clathrin box-like motif. Detected in bone marrow, adrenal gland, trachea, lymph node, spinal cord, peripheral blood leukocytes, thyroid and stomach.

The protein localises to the cell membrane. GTPase activating protein that acts on ARF6. Plays a role in clathrin-dependent endocytosis. May play a role in erythropoiesis. This Homo sapiens (Human) protein is Stromal membrane-associated protein 1 (SMAP1).